The primary structure comprises 167 residues: Leptin (167 aa).

The N-terminal stretch at 1-21 (MRCGSLCRFLWLWSCLSYIEA) is a signal peptide. A disulfide bond links Cys117 and Cys167.

This sequence belongs to the leptin family.

It is found in the secreted. In terms of biological role, key player in the regulation of energy balance and body weight control. Once released into the circulation, has central and peripheral effects by binding LEPR, found in many tissues, which results in the activation of several major signaling pathways. In the hypothalamus, acts as an appetite-regulating factor that induces a decrease in food intake and an increase in energy consumption by inducing anorexinogenic factors and suppressing orexigenic neuropeptides, also regulates bone mass and secretion of hypothalamo-pituitary-adrenal hormones. In the periphery, increases basal metabolism, influences reproductive function, regulates pancreatic beta-cell function and insulin secretion, is pro-angiogenic for endothelial cell and affects innate and adaptive immunity. In the arcuate nucleus of the hypothalamus, activates by depolarization POMC neurons inducing FOS and SOCS3 expression to release anorexigenic peptides and inhibits by hyperpolarization NPY neurons inducing SOCS3 with a consequent reduction on release of orexigenic peptides. In addition to its known satiety inducing effect, has a modulatory role in nutrient absorption. In the intestine, reduces glucose absorption by enterocytes by activating PKC and leading to a sequential activation of p38, PI3K and ERK signaling pathways which exerts an inhibitory effect on glucose absorption. Acts as a growth factor on certain tissues, through the activation of different signaling pathways increases expression of genes involved in cell cycle regulation such as CCND1, via JAK2-STAT3 pathway, or VEGFA, via MAPK1/3 and PI3K-AKT1 pathways. May also play an apoptotic role via JAK2-STAT3 pathway and up-regulation of BIRC5 expression. Pro-angiogenic, has mitogenic activity on vascular endothelial cells and plays a role in matrix remodeling by regulating the expression of matrix metalloproteinases (MMPs) and tissue inhibitors of metalloproteinases (TIMPs). In innate immunity, modulates the activity and function of neutrophils by increasing chemotaxis and the secretion of oxygen radicals. Increases phagocytosis by macrophages and enhances secretion of pro-inflammatory mediators. Increases cytotoxic ability of NK cells. Plays a pro-inflammatory role, in synergy with IL1B, by inducing NOS2 which promotes the production of IL6, IL8 and Prostaglandin E2, through a signaling pathway that involves JAK2, PI3K, MAP2K1/MEK1 and MAPK14/p38. In adaptive immunity, promotes the switch of memory T-cells towards T helper-1 cell immune responses. Increases CD4(+)CD25(-) T-cell proliferation and reduces autophagy during TCR (T-cell receptor) stimulation, through MTOR signaling pathway activation and BCL2 up-regulation. The chain is Leptin (LEP) from Phoca vitulina (Harbor seal).